A 170-amino-acid polypeptide reads, in one-letter code: MTHCCSPCCQPTCCRTTCCRTTCWKPTTVTTCSSTPCCQPTCCVSSCCQPCCCPTCCQNTCCRTTCCQPTCVTSCYQPSCCSTPCCQPTCCGSSCCGQTSCGQSSSCTPVYCRRTCYYPTNVCLPGCLNQSCGSSCCQPCCHPACCETTCCRTTCFQPTCVSSCCQPSCC.

17 tandem repeats follow at residues 8–12 (CCQPT), 13–17 (CCRTT), 18–22 (CCRTT), 37–41 (CCQPT), 42–46 (CCVSS), 51–55 (CCCPT), 61–65 (CCRTT), 66–70 (CCQPT), 75–79 (CYQPS), 80–84 (CCSTP), 85–89 (CCQPT), 90–94 (CCGSS), 95–99 (CCGQT), 140–144 (CCHPA), 145–149 (CCETT), 150–154 (CCRTT), and 164–168 (CCQPS). The 17 X 5 AA repeats of C-C-[RQVSGE]-[SPTQ]-[TASP] stretch occupies residues 8 to 168 (CCQPTCCRTT…TCVSSCCQPS (161 aa)).

The protein belongs to the KRTAP type 9 family. As to quaternary structure, interacts with hair keratins.

Its function is as follows. In the hair cortex, hair keratin intermediate filaments are embedded in an interfilamentous matrix, consisting of hair keratin-associated proteins (KRTAP), which are essential for the formation of a rigid and resistant hair shaft through their extensive disulfide bond cross-linking with abundant cysteine residues of hair keratins. The matrix proteins include the high-sulfur and high-glycine-tyrosine keratins. In Pan troglodytes (Chimpanzee), this protein is Keratin-associated protein 9-2 (KRTAP9-2).